A 160-amino-acid polypeptide reads, in one-letter code: Iron-sulfur assembly protein IscA1 (160 aa).

The protein belongs to the HesB/IscA family. Tetramer.

The protein resides in the mitochondrion. Its pathway is cofactor biosynthesis; iron-sulfur cluster biosynthesis. Functionally, participates in iron-sulfur cluster formation (ISC) pathway for iron-sulfur (Fe-S) cluster biogenesis. Can bind iron and [4Fe-4S] clusters. May function as an iron chaperone. This chain is Iron-sulfur assembly protein IscA1, found in Plasmodium falciparum (isolate 3D7).